Consider the following 1044-residue polypeptide: Probable pre-mRNA-splicing factor ATP-dependent RNA helicase DEAH6 (1044 aa).

Disordered regions lie at residues 99-134 and 152-211; these read EADH…SEQL and RRKV…VRRD. The segment covering 157-167 has biased composition (acidic residues); the sequence is EDEDDGTESEE. Over residues 168-211 the composition is skewed to basic and acidic residues; the sequence is ERLRDQREREELEQHLRERDTARTRKLTEPKMSKKEQEEFVRRD. The region spanning 414-577 is the Helicase ATP-binding domain; that stretch reads LNAVKDHQVL…FDQAPIFRFP (164 aa). 427–434 is an ATP binding site; the sequence is GETGSGKT. Residues 524 to 527 carry the DEAH box motif; it reads DEAH. Residues 599–775 enclose the Helicase C-terminal domain; the sequence is AITTVLTIHV…SVVLSLKSLG (177 aa).

It belongs to the DEAD box helicase family. DEAH subfamily. PRP2 sub-subfamily. Predominantly expressed in flowers.

It catalyses the reaction ATP + H2O = ADP + phosphate + H(+). In terms of biological role, may be involved in pre-mRNA splicing. This chain is Probable pre-mRNA-splicing factor ATP-dependent RNA helicase DEAH6, found in Arabidopsis thaliana (Mouse-ear cress).